We begin with the raw amino-acid sequence, 901 residues long: MMMVLQPEGLGTGEGPFAGGRGGGEYMEQEEDWDRDLLLDPAWEKQQRKTFTAWCNSHLRKAGTQIENIEEDFRNGLKLMLLLEVISGERLPRPDKGKMRFHKIANVNKALDFIASKGVKLVSIGAEEIVDGNLKMTLGMIWTIILRFAIQDISVEETSAKEGLLLWCQRKTAPYRNVNVQNFHTSWKDGLALCALIHRHRPDLIDYAKLRKDDPIGNLNTAFEVAEKYLDIPKMLDAEDIVNTPKPDEKAIMTYVSCFYHAFAGAEQAETAANRICKVLAVNQENEKLMEEYEKLASELLEWIRRTVPWLENRVGEPSMSAMQRKLEDFRDYRRLHKPPRVQEKCQLEINFNTLQTKLRLSHRPAFMPSEGKLVSDIANAWRGLEQAEKGYEDWLLSEIRRLQRLQHLAEKFQQKASLHEAWTRGKEDMLSQRDYETASLQEVRALLRRHEAFESDLAAHQDRVEHIAALAQELNELDYHEAASVNSRCQAICDQWDNLGTLTQKRRDALERMEKLLETIDQLQLEFARRAAPFNNWLDGAVEDLQDVWLVHSVEETQSLVTAHDQFKATLPEADRERGAILGIQGEIQKICQTYGLRPSSTNPYITLTPQDINTKWDTVRKLVPSRDQMLQEELTRQQVNERLRRQFAAQANAIGPWIQGKVEEVGRLAAGMAGSLEEQMAGLRQQEQNIINYKSNIDRLEGDHQLLQESLVFDNKHTVYSMEHIRVGWEQLLTSIARTINEVENQVLTRDAKGLSQEQLNEFRASFNHFDRKRNGMMEPDDFRACLISMGYDLGEVEFARIMTMVDPNAAGVVTFQAFIDFMTRETAETDTAEQVVASFKILAGDKNYITAEELRRELPAEQAEYCIRRMAPYKGAGAPAGALDYVAFSSALYGESDL.

M1 bears the N-acetylmethionine mark. The segment at 1–261 is actin-binding; that stretch reads MMMVLQPEGL…IMTYVSCFYH (261 aa). 2 consecutive Calponin-homology (CH) domains span residues 45-149 and 158-264; these read KQQR…LRFA and TSAK…HAFA. 4 Spectrin repeats span residues 288–398, 408–513, 523–634, and 644–747; these read KLME…WLLS, HLAE…ALER, QLQL…MLQE, and RLRR…EVEN. 2 EF-hand domains span residues 760–795 and 796–831; these read EQLNEFRASFNHFDRKRNGMMEPDDFRACLISMGYD and LGEVEFARIMTMVDPNAAGVVTFQAFIDFMTRETAE. Ca(2+) contacts are provided by D773, N777, M779, D784, D809, and N811.

The protein belongs to the alpha-actinin family. In terms of assembly, homodimer; antiparallel. Also forms heterodimers with ACTN2. Interacts with MYOZ1.

Functionally, F-actin cross-linking protein which is thought to anchor actin to a variety of intracellular structures. This is a bundling protein. The sequence is that of Alpha-actinin-3 (ACTN3) from Bos taurus (Bovine).